A 153-amino-acid chain; its full sequence is Putative adenylate kinase (153 aa).

Residues glycine 12, glycine 14, lysine 15, serine 16, and threonine 17 each coordinate ATP. The interval 31–47 (EGNELAKEYGCLFDEEV) is NMP. Positions 94-104 (ARGYSEEKIQE) are LID. An ATP-binding site is contributed by arginine 95.

Belongs to the adenylate kinase family. AK6 subfamily. As to quaternary structure, interacts with uS11. Not a structural component of 40S pre-ribosomes, but transiently interacts with them by binding to uS11.

The enzyme catalyses AMP + ATP = 2 ADP. It carries out the reaction ATP + H2O = ADP + phosphate + H(+). Its function is as follows. Broad-specificity nucleoside monophosphate (NMP) kinase that catalyzes the reversible transfer of the terminal phosphate group between nucleoside triphosphates and monophosphates. Also has ATPase activity. Involved in the late maturation steps of the 30S ribosomal particles, specifically 16S rRNA maturation. While NMP activity is not required for ribosome maturation, ATPase activity is. Associates transiently with small ribosomal subunit protein uS11. ATP hydrolysis breaks the interaction with uS11. May temporarily remove uS11 from the ribosome to enable a conformational change of the ribosomal RNA that is needed for the final maturation step of the small ribosomal subunit. The sequence is that of Putative adenylate kinase from Thermoplasma volcanium (strain ATCC 51530 / DSM 4299 / JCM 9571 / NBRC 15438 / GSS1).